A 149-amino-acid polypeptide reads, in one-letter code: Endoribonuclease YbeY (149 aa).

Zn(2+) contacts are provided by His-116, His-120, and His-126.

This sequence belongs to the endoribonuclease YbeY family. It depends on Zn(2+) as a cofactor.

It is found in the cytoplasm. Functionally, single strand-specific metallo-endoribonuclease involved in late-stage 70S ribosome quality control and in maturation of the 3' terminus of the 16S rRNA. The protein is Endoribonuclease YbeY of Nocardioides sp. (strain ATCC BAA-499 / JS614).